Here is a 468-residue protein sequence, read N- to C-terminus: Putative proline/betaine transporter (468 aa).

Helical transmembrane passes span 20-42, 63-83, 91-111, 115-135, 164-184, 191-211, 246-266, 284-304, 312-332, 336-356, 376-396, and 403-423; these read VFAT…YTTA, FAAL…FGII, VVLT…GVLP, MIGL…GFST, IGTL…SFFL, AWGW…GLYL, ILVC…VTAY, VLIT…GKLA, VFLI…SLLN, LPFI…YEAT, VTFN…NSWL, and IYAP…VIAV.

It belongs to the major facilitator superfamily. Metabolite:H+ Symporter (MHS) family (TC 2.A.1.6) family.

It is found in the cell membrane. In terms of biological role, may be a proton symporter involved in the uptake of osmolytes such as proline and glycine betaine. The sequence is that of Putative proline/betaine transporter (proP) from Staphylococcus haemolyticus (strain JCSC1435).